We begin with the raw amino-acid sequence, 252 residues long: 5'-methylthioadenosine/S-adenosylhomocysteine nucleosidase (252 aa).

The active-site Proton acceptor is Glu-20. Substrate-binding positions include Gly-86, Ile-160, and 181-182 (ME). The active-site Proton donor is the Asp-205.

Belongs to the PNP/UDP phosphorylase family. MtnN subfamily. Homodimer.

The enzyme catalyses S-adenosyl-L-homocysteine + H2O = S-(5-deoxy-D-ribos-5-yl)-L-homocysteine + adenine. The catalysed reaction is S-methyl-5'-thioadenosine + H2O = 5-(methylsulfanyl)-D-ribose + adenine. It catalyses the reaction 5'-deoxyadenosine + H2O = 5-deoxy-D-ribose + adenine. The protein operates within amino-acid biosynthesis; L-methionine biosynthesis via salvage pathway; S-methyl-5-thio-alpha-D-ribose 1-phosphate from S-methyl-5'-thioadenosine (hydrolase route): step 1/2. Catalyzes the irreversible cleavage of the glycosidic bond in both 5'-methylthioadenosine (MTA) and S-adenosylhomocysteine (SAH/AdoHcy) to adenine and the corresponding thioribose, 5'-methylthioribose and S-ribosylhomocysteine, respectively. Also cleaves 5'-deoxyadenosine, a toxic by-product of radical S-adenosylmethionine (SAM) enzymes, into 5-deoxyribose and adenine. Thus, is required for in vivo function of the radical SAM enzymes biotin synthase and lipoic acid synthase, that are inhibited by 5'-deoxyadenosine accumulation. This Buchnera aphidicola subsp. Baizongia pistaciae (strain Bp) protein is 5'-methylthioadenosine/S-adenosylhomocysteine nucleosidase.